The chain runs to 258 residues: Octanoyltransferase (258 aa).

Positions 42-226 (NVGTDTLLLL…AVVAALDGEL (185 aa)) constitute a BPL/LPL catalytic domain. Residues 80–87 (RGGKITWH), 156–158 (AIG), and 169–171 (GFS) each bind substrate. The active-site Acyl-thioester intermediate is the Cys187.

Belongs to the LipB family.

The protein localises to the cytoplasm. It carries out the reaction octanoyl-[ACP] + L-lysyl-[protein] = N(6)-octanoyl-L-lysyl-[protein] + holo-[ACP] + H(+). Its pathway is protein modification; protein lipoylation via endogenous pathway; protein N(6)-(lipoyl)lysine from octanoyl-[acyl-carrier-protein]: step 1/2. Its function is as follows. Catalyzes the transfer of endogenously produced octanoic acid from octanoyl-acyl-carrier-protein onto the lipoyl domains of lipoate-dependent enzymes. Lipoyl-ACP can also act as a substrate although octanoyl-ACP is likely to be the physiological substrate. This is Octanoyltransferase from Rhodococcus jostii (strain RHA1).